A 128-amino-acid chain; its full sequence is Anion exchange transporter (128 aa).

At 1–14 (LFSFKELNEQFKRK) the chain is on the extracellular side. The chain crosses the membrane as a helical span at residues 15 to 35 (IKVVLPVDLVLIIAASFACYC). The Cytoplasmic portion of the chain corresponds to 36–66 (TNMENTYGLEVVGHIPRGIPPPRAPPMNILS). Residues 67-87 (AVITEAFGVALVGYAASLALA) form a helical membrane-spanning segment. At 88–103 (QGSAKKFKYSVDDNQE) the chain is on the extracellular side. A helical transmembrane segment spans residues 104-124 (FLAHGLSNVISSFLFCIPSAA). Topologically, residues 125-128 (AMGR) are cytoplasmic.

The protein belongs to the SLC26A/SulP transporter (TC 2.A.53) family. In terms of tissue distribution, expressed in gastric epithelium, predominantly in the gastric parietal cells but also at lower levels in mucosal cells.

The protein localises to the basolateral cell membrane. Its subcellular location is the recycling endosome membrane. The protein resides in the apical cell membrane. It localises to the lateral cell membrane. The enzyme catalyses chloride(in) = chloride(out). The catalysed reaction is iodide(out) = iodide(in). It catalyses the reaction bromide(in) = bromide(out). It carries out the reaction oxalate(in) = oxalate(out). The enzyme catalyses nitrate(in) = nitrate(out). The catalysed reaction is sulfate(in) = sulfate(out). It catalyses the reaction D-gluconate(in) = D-gluconate(out). It carries out the reaction thiocyanate(in) = thiocyanate(out). The enzyme catalyses hydrogencarbonate(in) = hydrogencarbonate(out). The catalysed reaction is hydrogencarbonate(in) + chloride(out) = hydrogencarbonate(out) + chloride(in). Its function is as follows. Acts as an anion channel mediating the transport of chloride, bromide, iodide, nitrate, sulfate, gluconate, thiocyanate, oxalate and bicarbonate ions. Its permeability towards bicarbonate is weak and increases when pH is above 7. Mediates thiocyanate transport in retinal pigment epithelium cells. Mediates iodide transport in the thyroid gland, playing an important role in the synthesis of thyroid hormones and the maintenance of thyroid function. The protein is Anion exchange transporter of Oryctolagus cuniculus (Rabbit).